A 249-amino-acid chain; its full sequence is Type I iodothyronine deiodinase (249 aa).

Residues 1 to 12 (MGLPQPGLWLKR) are Extracellular-facing. The helical; Signal-anchor for type III membrane protein transmembrane segment at 13 to 33 (LWVLLEVAVHVVVGKVLLILF) threads the bilayer. Residues 34–249 (PDRVKRNILA…VRAVLEKLHS (216 aa)) are Cytoplasmic-facing. Residue Sec126 is part of the active site. Sec126 is a non-standard amino acid (selenocysteine).

It belongs to the iodothyronine deiodinase family. In terms of assembly, predominantly monomer. Can form homodimers but homodimerization is not essential for enzyme activity.

The protein localises to the cell membrane. The protein resides in the endoplasmic reticulum membrane. It is found in the basolateral cell membrane. It catalyses the reaction 3,3',5-triiodo-L-thyronine + iodide + A + H(+) = L-thyroxine + AH2. The enzyme catalyses 3,3',5'-triiodo-L-thyronine + iodide + A + H(+) = L-thyroxine + AH2. It carries out the reaction 3,3'-diiodo-L-thyronine + iodide + A + H(+) = 3,3',5'-triiodo-L-thyronine + AH2. The catalysed reaction is 3,3'-diiodo-L-thyronine + iodide + A + H(+) = 3,3',5-triiodo-L-thyronine + AH2. It catalyses the reaction 3'-iodo-L-thyronine + iodide + A + H(+) = 3',5'-diiodo-L-thyronine + AH2. The enzyme catalyses 3-iodo-L-thyronine + iodide + A + H(+) = 3,5-diiodo-L-thyronine + AH2. It carries out the reaction 3-iodo-L-thyronine + iodide + A + H(+) = 3,3'-diiodo-L-thyronine + AH2. The catalysed reaction is 3,3'-diiodothyronamine + iodide + A + H(+) = 3,3',5'-triiodothyronamine + AH2. It catalyses the reaction 3'-iodothyronamine + iodide + A + H(+) = 3',5'-diiodothyronamine + AH2. The enzyme catalyses 3-iodothyronamine + iodide + A + H(+) = 3,3'-diiodothyronamine + AH2. It carries out the reaction 3,3'-diiodothyronamine + iodide + A + H(+) = 3,3',5-triiodothyronamine + AH2. The catalysed reaction is 3-iodothyronamine + iodide + A + H(+) = 3,5-diiodothyronamine + AH2. It catalyses the reaction 3,3'-diiodo-L-thyronine sulfate + iodide + A + H(+) = 3,3',5'-triiodo-L-thyronine sulfate + AH2. The enzyme catalyses 3,3',5'-triiodo-L-thyronine sulfate + iodide + A + H(+) = L-thyroxine sulfate + AH2. It carries out the reaction 3,3'-diiodo-L-thyronine sulfate + iodide + A + H(+) = 3,3',5-triiodo-L-thyronine sulfate + AH2. Its activity is regulated as follows. Deiodination of substrates 3,3',5'-triiodothyronine, 3,3',5'-triiodothyronamine and 3',5'- diiodothyronamine are inhibited by 6n-propyl-2-thiouracil (PTU). In terms of biological role, plays a crucial role in the metabolism of thyroid hormones (TH) and has specific roles in TH activation and inactivation by deiodination. Catalyzes the deiodination of L-thyroxine (T4) to 3,5,3'-triiodothyronine (T3), 3,3',5'-triiodothyronine (rT3) to 3,3'-diiodothyronine (3,3'-T2) and 3',5'-diiodothyronine (3',5'-T2) to 3'-monoiodothyronine (3'-T1) via outer-ring deiodination (ORD). Catalyzes the deiodination of T4 to 3,3',5'-triiodothyronine (rT3) via inner-ring deiodination (IRD). Catalyzes the deiodination of T3 to 3,3'-T2, 3,5-diiodothyronine (3,5-T2) to 3- monoiodothyronine (3-T1) and 3,3'-T2 to 3-T1 via IRD. Catalyzes the phenolic ring deiodinations of 3,3',5'-triiodothyronamine and 3',5'-diiodothyronamine. Catalyzes the phenolic ring deiodination of 3,3'-diiodothyronamine and tyrosyl ring deiodinations of 3,5,3'-triiodothyronamine and 3,5-diiodothyronamine. Catalyzes the deiodination of L-thyroxine sulfate and 3,3',5-triiodo-L-thyronine sulfate via IRD and of 3,3',5'-triiodo-L-thyronine sulfate via ORD. In Homo sapiens (Human), this protein is Type I iodothyronine deiodinase (DIO1).